We begin with the raw amino-acid sequence, 1097 residues long: Nitric oxide synthase-like protein (1097 aa).

Residue C77 participates in heme b binding. L-arginine-binding residues include Q140, W249, Y250, E254, and N259. Residues W340 and F353 each coordinate (6R)-L-erythro-5,6,7,8-tetrahydrobiopterin. Heme b is bound at residue Y368. Residues 387-410 are calmodulin-binding; the sequence is KRPINRKFHFKQIARAVKFTSKLF. Positions 420-615 constitute a Flavodoxin-like domain; it reads ATVLYATETG…AFRKWASSVF (196 aa). FMN is bound by residues 426–430 and 561–592; these read TETGK and VFALGSSAYPNFCNFGKYVDKLLVDLGGERIH. Positions 669–914 constitute an FAD-binding FR-type domain; the sequence is KQFVSCTVKA…IRSAPNFHLP (246 aa). Residues 704-715 and 847-857 each bind FAD; these read YNPGDHVGIIAC and LQPRFYSISSS. NADP(+) contacts are provided by residues 922-940 and 1019-1034; these read ILIGPGTGIAPFRGFWHHR and GAHFYVCGDCKMAEDV.

This sequence belongs to the NOS family. Requires heme b as cofactor. The cofactor is FAD. It depends on FMN as a cofactor.

It catalyses the reaction 2 L-arginine + 3 NADPH + 4 O2 + H(+) = 2 L-citrulline + 2 nitric oxide + 3 NADP(+) + 4 H2O. In terms of biological role, produces nitric oxide (NO) which is a messenger molecule with diverse functions throughout the body. The protein is Nitric oxide synthase-like protein of Bombyx mori (Silk moth).